The chain runs to 100 residues: MARKGLIQRERKRQKLEQKYHLIRRSPKKEIGKVSSLSDKWKIHGKLQSPPRNSAPTRLHRRCFLTGRPRANYRDFGLSGHILREKVHACLLPGATRSSW.

Belongs to the universal ribosomal protein uS14 family. In terms of assembly, part of the 30S ribosomal subunit.

Its subcellular location is the plastid. The protein localises to the chloroplast. Binds 16S rRNA, required for the assembly of 30S particles. The chain is Small ribosomal subunit protein uS14c from Calycanthus floridus var. glaucus (Eastern sweetshrub).